A 2225-amino-acid chain; its full sequence is Multifunctional protein CAD (2225 aa).

Position 2 is an N-acetylalanine (A2). The tract at residues 2 to 365 (AALVLEDGSV…TVKEATAGNP (364 aa)) is GATase (Glutamine amidotransferase). Positions 44, 222, and 224 each coordinate L-glutamine. In terms of domain architecture, Glutamine amidotransferase type-1 spans 177–363 (RILALDCGLK…LETVKEATAG (187 aa)). Catalysis depends on C252, which acts as the Nucleophile; for GATase activity. 5 residues coordinate L-glutamine: L253, Q256, N294, G296, and F297. Catalysis depends on for GATase activity residues H336 and E338. Residues 366 to 394 (GGQTVRERLTERLCPPGIPTPGSGLPPPR) are linker. The CPSase A stretch occupies residues 395–933 (KVLILGSGGL…TTHDLTFRTP (539 aa)). Residues 395-1455 (KVLILGSGGL…APPLKVHVDC (1061 aa)) are CPSase (Carbamoyl phosphate synthase). T456 is modified (phosphothreonine; by MAPK1). ATP is bound by residues R515, R555, G561, G562, K592, E599, G625, I626, H627, Q668, and E682. The ATP-grasp 1 domain occupies 519 to 711 (AARMAEIGEH…LAYVAAKLAL (193 aa)). Q668, E682, and N684 together coordinate Mg(2+). Residues Q668, E682, and N684 each contribute to the Mn(2+) site. K747 carries the post-translational modification N6-acetyllysine. The tract at residues 934-1455 (HVLVLGSGVY…APPLKVHVDC (522 aa)) is CPSase B. S1038 bears the Phosphoserine mark. One can recognise an ATP-grasp 2 domain in the interval 1052-1243 (SRLLDTIGIS…LVALATRVIM (192 aa)). The ATP site is built by R1088, K1127, I1129, E1134, G1159, V1160, H1161, S1162, Q1202, and E1214. Residues Q1202, E1214, and N1216 each coordinate Mg(2+). Residues Q1202, E1214, and N1216 each contribute to the Mn(2+) site. One can recognise an MGS-like domain in the interval 1308–1462 (FKIPKKNILL…VDCMTSQKLV (155 aa)). Position 1406 is a phosphoserine; by PKA (S1406). K1411 is subject to N6-acetyllysine. Positions 1456–1788 (MTSQKLVRLP…VKGTVRRVVL (333 aa)) are DHOase (dihydroorotase). H1471 and H1473 together coordinate Zn(2+). (S)-dihydroorotate-binding residues include R1475 and N1505. Zn(2+) is bound by residues K1556, H1590, C1613, H1614, and E1637. K1556 carries the N6-carboxylysine modification. R1661 serves as a coordination point for (S)-dihydroorotate. D1686 contributes to the Zn(2+) binding site. D1686 serves as the catalytic For DHOase activity. 2 residues coordinate (S)-dihydroorotate: H1690 and P1702. A linker region spans residues 1789 to 1917 (RGEVAYIDGQ…GLLHPQTSPL (129 aa)). The segment at 1811-1899 (KWPQGAVPQL…YPPPPVPRQA (89 aa)) is disordered. Polar residues predominate over residues 1825–1834 (PATSEMTTTP). S1859 is modified (phosphoserine; by RPS6KB1 and PKA). Residues 1866-1878 (EEPKEKSSRKVAE) are compositionally biased toward basic and acidic residues. The residue at position 1873 (S1873) is a Phosphoserine; by PKC; in vitro. Phosphothreonine is present on T1884. A phosphoserine mark is found at S1900 and S1938. The ATCase (Aspartate transcarbamylase) stretch occupies residues 1918–2225 (LHSLVGQHIL…ALLATVLGRF (308 aa)). Positions 1975 and 1976 each coordinate carbamoyl phosphate. K2003 is a binding site for L-aspartate. Carbamoyl phosphate is bound by residues R2024, H2052, and Q2055. Residues R2085 and R2146 each coordinate L-aspartate. Carbamoyl phosphate contacts are provided by M2185 and P2186.

It in the N-terminal section; belongs to the CarA family. In the 2nd section; belongs to the CarB family. The protein in the 3rd section; belongs to the metallo-dependent hydrolases superfamily. DHOase family. CAD subfamily. This sequence in the C-terminal section; belongs to the aspartate/ornithine carbamoyltransferase superfamily. ATCase family. Homohexamer. Interacts with CIPC. The cofactor is Zn(2+). Requires Mg(2+) as cofactor. Mn(2+) is required as a cofactor. In terms of processing, activated by MAP kinase (Erk1/2) phosphorylation just prior to the S phase of the cell cycle, when the demand for pyrimidine nucleotides is greatest, and down-regulated as the cells emerge from S phase by protein kinase A (PKA) phosphorylation. Phosphorylation at Ser-1859 by RPS6KB1 downstream of MTOR promotes oligomerization and stimulates dihydroorotase activity. Phosphorylation at Ser-1406 reduces sensitivity to feedback inhibition by UTP.

Its subcellular location is the cytoplasm. The protein resides in the nucleus. It catalyses the reaction hydrogencarbonate + L-glutamine + 2 ATP + H2O = carbamoyl phosphate + L-glutamate + 2 ADP + phosphate + 2 H(+). The catalysed reaction is L-glutamine + H2O = L-glutamate + NH4(+). It carries out the reaction hydrogencarbonate + NH4(+) + 2 ATP = carbamoyl phosphate + 2 ADP + phosphate + 2 H(+). The enzyme catalyses carbamoyl phosphate + L-aspartate = N-carbamoyl-L-aspartate + phosphate + H(+). It catalyses the reaction (S)-dihydroorotate + H2O = N-carbamoyl-L-aspartate + H(+). It functions in the pathway pyrimidine metabolism; UMP biosynthesis via de novo pathway; (S)-dihydroorotate from bicarbonate: step 1/3. The protein operates within pyrimidine metabolism; UMP biosynthesis via de novo pathway; (S)-dihydroorotate from bicarbonate: step 2/3. Its pathway is pyrimidine metabolism; UMP biosynthesis via de novo pathway; (S)-dihydroorotate from bicarbonate: step 3/3. With respect to regulation, allosterically regulated and controlled by phosphorylation. 5-phosphoribose 1-diphosphate (PRPP) is an activator while UMP and UTP are inhibitors of the CPSase reaction. Multifunctional protein that encodes the first 3 enzymatic activities of the de novo pyrimidine pathway: carbamoylphosphate synthetase (CPSase; EC 6.3.5.5), aspartate transcarbamylase (ATCase; EC 2.1.3.2) and dihydroorotase (DHOase; EC 3.5.2.3). The CPSase-function is accomplished in 2 steps, by a glutamine-dependent amidotransferase activity (GATase) that binds and cleaves glutamine to produce ammonia, followed by an ammonium-dependent carbamoyl phosphate synthetase, which reacts with the ammonia, hydrogencarbonate and ATP to form carbamoyl phosphate. The endogenously produced carbamoyl phosphate is sequestered and channeled to the ATCase active site. ATCase then catalyzes the formation of carbamoyl-L-aspartate from L-aspartate and carbamoyl phosphate. In the last step, DHOase catalyzes the cyclization of carbamoyl aspartate to dihydroorotate. This Homo sapiens (Human) protein is Multifunctional protein CAD.